The sequence spans 445 residues: C-terminal-binding protein 2 (445 aa).

Arg22 carries the asymmetric dimethylarginine modification. Residues Ser106, 186–191 (IGFGRT), Asp210, 243–249 (CNLNEHN), 270–272 (AAR), and Asp296 contribute to the NAD(+) site. Residue Arg272 is part of the active site. Glu301 is an active-site residue. The active-site Proton donor is the His321. 321–324 (HTAW) contacts NAD(+). Residues 414 to 445 (THNLPTVAHPSQAPSPNQPTKHGDNREHPNEQ) form a disordered region. At Ser428 the chain carries Phosphoserine; by HIPK2. The segment covering 434 to 445 (KHGDNREHPNEQ) has biased composition (basic and acidic residues).

It belongs to the D-isomer specific 2-hydroxyacid dehydrogenase family. In terms of assembly, interacts with HIPK2, ZNF217 and PNN. Interacts with the transcription factors BKLF, delta EF1/AREB6/ZEB, EVI-1 and Friend of GATA (FOG) via the consensus motif P-X-[DNS]-L-[STVA]. Can form a complex with BKLF on a CACCC-box oligonucleotide. Can form homodimers or heterodimers of CTBP1 and CTBP2. Interacts with NRIP1 and WIZ. Interacts with PRDM16; represses white adipose tissue (WAT)-specific genes expression. Interacts with MCRIP1. Post-translationally, phosphorylation by HIPK2 on Ser-428 induces proteasomal degradation. In terms of tissue distribution, isoform 2 is specifically localized in synaptic ribbon (at protein level).

Its subcellular location is the nucleus. It is found in the synapse. Its function is as follows. Corepressor targeting diverse transcription regulators. Functions in brown adipose tissue (BAT) differentiation. Isoform 2 probably acts as a scaffold for specialized synapses. This Rattus norvegicus (Rat) protein is C-terminal-binding protein 2 (Ctbp2).